The sequence spans 95 residues: Protein TusB (95 aa).

Belongs to the DsrH/TusB family. In terms of assembly, heterohexamer, formed by a dimer of trimers. The hexameric TusBCD complex contains 2 copies each of TusB, TusC and TusD. The TusBCD complex interacts with TusE.

Its subcellular location is the cytoplasm. Part of a sulfur-relay system required for 2-thiolation of 5-methylaminomethyl-2-thiouridine (mnm(5)s(2)U) at tRNA wobble positions. The protein is Protein TusB of Pectobacterium carotovorum subsp. carotovorum (strain PC1).